The sequence spans 182 residues: Adenine phosphoribosyltransferase (182 aa).

This sequence belongs to the purine/pyrimidine phosphoribosyltransferase family. In terms of assembly, homodimer.

The protein localises to the cytoplasm. The enzyme catalyses AMP + diphosphate = 5-phospho-alpha-D-ribose 1-diphosphate + adenine. It functions in the pathway purine metabolism; AMP biosynthesis via salvage pathway; AMP from adenine: step 1/1. Functionally, catalyzes a salvage reaction resulting in the formation of AMP, that is energically less costly than de novo synthesis. This Streptomyces avermitilis (strain ATCC 31267 / DSM 46492 / JCM 5070 / NBRC 14893 / NCIMB 12804 / NRRL 8165 / MA-4680) protein is Adenine phosphoribosyltransferase.